The following is a 644-amino-acid chain: SPbeta prophage-derived uncharacterized protein YomE (644 aa).

The sequence is that of SPbeta prophage-derived uncharacterized protein YomE (yomE) from Bacillus subtilis (strain 168).